The chain runs to 379 residues: Succinate--CoA ligase [ADP-forming] subunit beta (379 aa).

The ATP-grasp domain maps to 9–236 (KEIARKYGIE…GRDATPYEKV (228 aa)). ATP-binding positions include K46, 53-55 (GRG), E92, V95, and E100. Residues N192 and D206 each coordinate Mg(2+). Substrate is bound by residues N256 and 313–315 (GIT).

This sequence belongs to the succinate/malate CoA ligase beta subunit family. In terms of assembly, heterotetramer of two alpha and two beta subunits. Mg(2+) is required as a cofactor.

The catalysed reaction is succinate + ATP + CoA = succinyl-CoA + ADP + phosphate. It catalyses the reaction GTP + succinate + CoA = succinyl-CoA + GDP + phosphate. It participates in carbohydrate metabolism; tricarboxylic acid cycle; succinate from succinyl-CoA (ligase route): step 1/1. In terms of biological role, succinyl-CoA synthetase functions in the citric acid cycle (TCA), coupling the hydrolysis of succinyl-CoA to the synthesis of either ATP or GTP and thus represents the only step of substrate-level phosphorylation in the TCA. The beta subunit provides nucleotide specificity of the enzyme and binds the substrate succinate, while the binding sites for coenzyme A and phosphate are found in the alpha subunit. This is Succinate--CoA ligase [ADP-forming] subunit beta from Desulfurococcus amylolyticus (strain DSM 18924 / JCM 16383 / VKM B-2413 / 1221n) (Desulfurococcus kamchatkensis).